We begin with the raw amino-acid sequence, 63 residues long: Large ribosomal subunit protein uL29 (63 aa).

The protein belongs to the universal ribosomal protein uL29 family.

This Colwellia psychrerythraea (strain 34H / ATCC BAA-681) (Vibrio psychroerythus) protein is Large ribosomal subunit protein uL29.